The primary structure comprises 420 residues: Vasopressin V1a receptor (420 aa).

A disordered region spans residues 1–45; it reads MSFPRGSYDPAASNSSPRWPLSAEDANSSREAAGHQKGSDPSGDV. Residues 1–54 lie on the Extracellular side of the membrane; the sequence is MSFPRGSYDPAASNSSPRWPLSAEDANSSREAAGHQKGSDPSGDVRNEELAKLE. N27 carries N-linked (GlcNAc...) asparagine glycosylation. The segment covering 32-45 has biased composition (basic and acidic residues); it reads AAGHQKGSDPSGDV. Residues 55 to 75 form a helical membrane-spanning segment; the sequence is IAVLAVIFVVAVLGNSSVLLA. Residues 76–92 are Cytoplasmic-facing; that stretch reads LHRTPRKTSRMHLFIRH. The helical transmembrane segment at 93–113 threads the bilayer; sequence LSLADLAVAFFQVLPQLCWDI. Residues 114–125 lie on the Extracellular side of the membrane; sequence TYRFRGPDWLCR. C124 and C205 form a disulfide bridge. Residues 126–146 form a helical membrane-spanning segment; that stretch reads VVKHLQVFAMFASAYMLVVMT. Over 147-168 the chain is Cytoplasmic; sequence ADRYIAVCHPLKTLQQPARRSR. The helical transmembrane segment at 169 to 189 threads the bilayer; that stretch reads LMIAASWVLSFLLSTPQYFIF. At 190 to 225 the chain is on the extracellular side; sequence SMIEIEVNNGTKTQDCWATFIQPWGTRAYVTWMTSG. N198 carries an N-linked (GlcNAc...) asparagine glycan. Residues 226-246 traverse the membrane as a helical segment; the sequence is VFVVPVVILGTCYGFICYHIW. The Cytoplasmic portion of the chain corresponds to 247–294; it reads RNVRGKTASRQSKGSGEDVAPFHKGLLVTPCVSSVKTISRAKIRTVKM. The chain crosses the membrane as a helical span at residues 295 to 315; the sequence is TFVIVTAYILCWAPFFIVQMW. At 316–331 the chain is on the extracellular side; the sequence is SVWDDNFIWTDSENPS. A helical membrane pass occupies residues 332-352; sequence ITITALLASLNSCCNPWIYMF. The Cytoplasmic segment spans residues 353-420; that stretch reads FSGHLLQDCV…RSIRFIPVST (68 aa). S-palmitoyl cysteine attachment occurs at residues C367 and C368. The interval 379–411 is disordered; that stretch reads DSDNMSRRQTSYSNNRSPTNSTGTWKDSPKSSR. Residues 385–403 show a composition bias toward polar residues; that stretch reads RRQTSYSNNRSPTNSTGTW. The residue at position 406 (S406) is a Phosphoserine.

The protein belongs to the G-protein coupled receptor 1 family. Vasopressin/oxytocin receptor subfamily.

The protein localises to the cell membrane. In terms of biological role, receptor for arginine vasopressin. The activity of this receptor is mediated by G proteins which activate a phosphatidyl-inositol-calcium second messenger system. Involved in social memory formation. This is Vasopressin V1a receptor (Avpr1a) from Microtus montanus (Montane vole).